A 643-amino-acid chain; its full sequence is RNA-binding protein RO60 (643 aa).

In terms of domain architecture, TROVE spans 63–473 (VENNAGGFVF…AFVNAPPTGK (411 aa)). The tract at residues 186–390 (RTPTHLFEFV…SMPMTAMIRN (205 aa)) is RNA-binding. Positions 465-643 (FVNAPPTGKR…IVHEFVTGKI (179 aa)) are VWFA-like domain. A divalent metal cation contacts are provided by serine 482, serine 484, and threonine 549.

The protein belongs to the Ro 60 kDa family.

Its subcellular location is the cytoplasm. RNA-binding protein that binds to misfolded non-coding RNAs, pre-5S rRNA, and several small cytoplasmic RNA molecules known as Y RNAs. This is RNA-binding protein RO60 from Caenorhabditis elegans.